We begin with the raw amino-acid sequence, 617 residues long: MDPTSKRPPPAASSSTTYPPLPKLEILNPSALPSHRFLRPAKRINEGPDVSHFLTSKAYRDIGVWILQLNHALVPRIIKKSTTVSTSEPTTDGQQQQQQQQQRQQKAEEVDEQQQPPPPPPTDALAAKLQLLRKKRDEQQPTTTEEIKTFPLPRYRDGEGVENQEESESIKKLQRLLKKVEAIIDEAPPDPGPRRFGNVSFRTWFKLLEERADGLLREYLPGGVLRWEQGAGGEKKEEEEGTETETETETEGDSDKKTNEQKQEVVGPLEELKAYFLGGFGSAQRLDYGTGHELSFIMFLGGLWKLGGFEGEENDEDGEVERRIVLGVVEPYLRVIRRLILTYTLEPAGSHGVWGLDDHSFVPYIFGSAQYTRPISSPNEPTPLEGSVPNAPKPSDITKPTAVERYRTENMYFSAIGFIYDVKKGPFWEHSPILFDVSGIKDGWGKINKGMIKMYNAEVLSKFPVVQHFPFGSLFQWEKDPEAGVPVQSVHMQNQPVASAAVTGGVGIPTERPSGPGGVTGTAAPWAQAPAQAPAAGIGAGAGMAPPMTAAPWARSTGAGAGAGVGASAANRFTPFKPAGGPGGAPHTGPPPPESFPSGTPGTASNQFAVTKAPWTK.

Residues 1-11 show a composition bias toward pro residues; it reads MDPTSKRPPPA. 5 disordered regions span residues 1–25, 84–169, 230–261, 376–398, and 572–617; these read MDPTSKRPPPAASSSTTYPPLPKLE, VSTS…ESES, GAGGEKKEEEEGTETETETETEGDSDKKTNEQ, SSPNEPTPLEGSVPNAPKPSDIT, and RFTP…PWTK. Positions 84–93 are enriched in polar residues; that stretch reads VSTSEPTTDG. Residues 94–104 are compositionally biased toward low complexity; that stretch reads QQQQQQQQQRQ. Over residues 239–252 the composition is skewed to acidic residues; the sequence is EEGTETETETETEG.

It belongs to the PTPA-type PPIase family.

The protein localises to the cytoplasm. It is found in the nucleus. It carries out the reaction [protein]-peptidylproline (omega=180) = [protein]-peptidylproline (omega=0). In terms of biological role, PPIases accelerate the folding of proteins. It catalyzes the cis-trans isomerization of proline imidic peptide bonds in oligopeptides. Acts as a regulatory subunit for PP2A-like phosphatases modulating their activity or substrate specificity, probably by inducing a conformational change in the catalytic subunit, a direct target of the PPIase. Can reactivate inactive phosphatase PP2A-phosphatase methylesterase complexes (PP2Ai) in presence of ATP and Mg(2+) by dissociating the inactive form from the complex. The sequence is that of Serine/threonine-protein phosphatase 2A activator 1 (rrd-1) from Neurospora crassa (strain ATCC 24698 / 74-OR23-1A / CBS 708.71 / DSM 1257 / FGSC 987).